The sequence spans 187 residues: Auxin-binding protein T92 (187 aa).

An N-terminal signal peptide occupies residues 1-20; the sequence is MARHIIILVAVFWFATAEAS. Residues Cys22 and Cys177 are joined by a disulfide bond. Residues His78, His80, and Glu84 each contribute to the Zn(2+) site. N-linked (GlcNAc...) asparagine glycosylation occurs at Asn117. His128 provides a ligand contact to Zn(2+). The Prevents secretion from ER motif lies at 184 to 187; that stretch reads KDEL.

In terms of assembly, homodimer.

It localises to the endoplasmic reticulum lumen. This is probably a receptor for the plant hormone auxin. The sequence is that of Auxin-binding protein T92 (T92) from Nicotiana tabacum (Common tobacco).